We begin with the raw amino-acid sequence, 336 residues long: uncharacterized protein (336 aa).

The signal sequence occupies residues 1-23; sequence MKTRHLVYLAFALLGLGLAGLLE. 3 helical membrane-spanning segments follow: residues 34–54, 75–95, and 106–126; these read LLSL…LLLG, VVVA…LLTT, and VHSL…ALGY. The PINc domain occupies 144–255; the sequence is VLDTSVLVDG…MARIYGVKAL (112 aa). Aspartate 222 provides a ligand contact to Mg(2+). In terms of domain architecture, TRAM spans 267 to 328; that stretch reads QLQVGDTLKL…IQTQVGRLFF (62 aa).

Belongs to the PINc/VapC protein family. Mg(2+) is required as a cofactor.

It is found in the membrane. In terms of biological role, part of a toxin-antitoxin (TA) system. An RNase. This is an uncharacterized protein from Thermus thermophilus (strain ATCC 27634 / DSM 579 / HB8).